Reading from the N-terminus, the 198-residue chain is Beta-crystallin A1-1 (198 aa).

The tract at residues 1–13 (MAQINPLPVPLGP) is N-terminal arm. Beta/gamma crystallin 'Greek key' domains are found at residues 14–53 (WKITVYDQENFQGKRMEFTSSCTNIMECGFDNIRSLKVEC) and 54–100 (GAWI…RPIC). The segment at 101-106 (SANHKE) is connecting peptide. Beta/gamma crystallin 'Greek key' domains follow at residues 107–148 (SKLV…KVQC) and 149–197 (GAWV…RRIQ).

The protein belongs to the beta/gamma-crystallin family. As to quaternary structure, homo/heterodimer, or complexes of higher-order. The structure of beta-crystallin oligomers seems to be stabilized through interactions between the N-terminal arms. Post-translationally, the N-terminus is blocked.

Functionally, crystallins are the dominant structural components of the vertebrate eye lens. The protein is Beta-crystallin A1-1 of Aquarana catesbeiana (American bullfrog).